A 273-amino-acid chain; its full sequence is MSTIRPVFYVSDGTGITAETIGHSLLTQFSGFSFITDRMSFVDDPEKAREACARIQAAGERYQVRPIVVNSCVDQSLSLILADSGALMLDVFAPFIEPLERELASPRLARVGQAHGMVDFDTYHRRINAMNFALTHDDGIAVNYDDADVILVAVSRAGKTPTCIYLALHYGVRAANYPLTDEDLESDRLPPRLRNYRRKLFGLTIDPDRLQQIRQERRPNSRYANLETCKREVAAAEVMFQMERIPTLSTTHTSIEEISSKVLATLGLQRELY.

An ADP-binding site is contributed by 153–160 (AVSRAGKT).

This sequence belongs to the pyruvate, phosphate/water dikinase regulatory protein family. PSRP subfamily.

The catalysed reaction is [pyruvate, water dikinase] + ADP = [pyruvate, water dikinase]-phosphate + AMP + H(+). The enzyme catalyses [pyruvate, water dikinase]-phosphate + phosphate + H(+) = [pyruvate, water dikinase] + diphosphate. Its function is as follows. Bifunctional serine/threonine kinase and phosphorylase involved in the regulation of the phosphoenolpyruvate synthase (PEPS) by catalyzing its phosphorylation/dephosphorylation. This chain is Putative phosphoenolpyruvate synthase regulatory protein, found in Stenotrophomonas maltophilia (strain K279a).